The sequence spans 488 residues: Long chain base biosynthesis protein 2a (488 aa).

The chain crosses the membrane as a helical span at residues 4–24 (LPYTTALTTLFSYGLLFAFGQ). The residue at position 311 (K311) is an N6-(pyridoxal phosphate)lysine.

It belongs to the class-II pyridoxal-phosphate-dependent aminotransferase family. Heterodimer with LCB1. Component of the serine palmitoyltransferase (SPT) complex, composed of LCB1 and LCB2. It depends on pyridoxal 5'-phosphate as a cofactor.

The protein resides in the endoplasmic reticulum membrane. It carries out the reaction L-serine + hexadecanoyl-CoA + H(+) = 3-oxosphinganine + CO2 + CoA. It functions in the pathway lipid metabolism; sphingolipid metabolism. Serine palmitoyltransferase (SPT). The heterodimer formed with LCB1 constitutes the catalytic core. This Oryza sativa subsp. japonica (Rice) protein is Long chain base biosynthesis protein 2a.